The following is a 340-amino-acid chain: tRNA N6-adenosine threonylcarbamoyltransferase (340 aa).

Residues histidine 113 and histidine 117 each contribute to the Fe cation site. Substrate-binding positions include 135–139 (LVSGG), aspartate 169, glycine 182, aspartate 186, and asparagine 274. Aspartate 302 lines the Fe cation pocket.

Belongs to the KAE1 / TsaD family. Fe(2+) is required as a cofactor.

It is found in the cytoplasm. It carries out the reaction L-threonylcarbamoyladenylate + adenosine(37) in tRNA = N(6)-L-threonylcarbamoyladenosine(37) in tRNA + AMP + H(+). Functionally, required for the formation of a threonylcarbamoyl group on adenosine at position 37 (t(6)A37) in tRNAs that read codons beginning with adenine. Is involved in the transfer of the threonylcarbamoyl moiety of threonylcarbamoyl-AMP (TC-AMP) to the N6 group of A37, together with TsaE and TsaB. TsaD likely plays a direct catalytic role in this reaction. This chain is tRNA N6-adenosine threonylcarbamoyltransferase, found in Mycolicibacterium smegmatis (strain ATCC 700084 / mc(2)155) (Mycobacterium smegmatis).